The primary structure comprises 724 residues: Phenylalanine ammonia-lyase (724 aa).

Catalysis depends on Tyr-99, which acts as the Proton donor/acceptor. Residues 204–206 constitute a cross-link (5-imidazolinone (Ala-Gly)); that stretch reads ASG. 2,3-didehydroalanine (Ser) is present on Ser-205. 7 residues coordinate (E)-cinnamate: Asn-265, Gln-355, Arg-361, Asn-391, Lys-462, Glu-490, and Asn-493.

This sequence belongs to the PAL/histidase family. As to quaternary structure, homotetramer. In terms of processing, contains an active site 4-methylidene-imidazol-5-one (MIO), which is formed autocatalytically by cyclization and dehydration of residues Ala-Ser-Gly.

It is found in the cytoplasm. The catalysed reaction is L-phenylalanine = (E)-cinnamate + NH4(+). It participates in phenylpropanoid metabolism; trans-cinnamate biosynthesis; trans-cinnamate from L-phenylalanine: step 1/1. Its function is as follows. Catalyzes the non-oxidative deamination of L-phenylalanine to form trans-cinnamic acid and a free ammonium ion. Facilitates the commitment step in phenylpropanoid pathways that produce secondary metabolites such as lignins, coumarins and flavonoids. In Flammulina velutipes (Agaricus velutipes), this protein is Phenylalanine ammonia-lyase.